The chain runs to 163 residues: Cyclic pyranopterin monophosphate synthase (163 aa).

Substrate is bound by residues 75 to 77 (LCH) and 113 to 114 (ME). D128 is a catalytic residue.

Belongs to the MoaC family. As to quaternary structure, homohexamer; trimer of dimers.

The enzyme catalyses (8S)-3',8-cyclo-7,8-dihydroguanosine 5'-triphosphate = cyclic pyranopterin phosphate + diphosphate. Its pathway is cofactor biosynthesis; molybdopterin biosynthesis. Functionally, catalyzes the conversion of (8S)-3',8-cyclo-7,8-dihydroguanosine 5'-triphosphate to cyclic pyranopterin monophosphate (cPMP). This is Cyclic pyranopterin monophosphate synthase from Magnetococcus marinus (strain ATCC BAA-1437 / JCM 17883 / MC-1).